A 350-amino-acid chain; its full sequence is Bifunctional UDP-glucose 4-epimerase and UDP-xylose 4-epimerase 1 (350 aa).

Residues 15–17, 36–40, 67–68, Phe-89, and Lys-93 contribute to the NAD(+) site; these read GFI, DNFDN, and DL. A substrate-binding site is contributed by Ser-133. Tyr-157 functions as the Proton acceptor in the catalytic mechanism. Lys-161 and Tyr-185 together coordinate NAD(+).

Belongs to the NAD(P)-dependent epimerase/dehydratase family. NAD(+) serves as cofactor.

It catalyses the reaction UDP-alpha-D-glucose = UDP-alpha-D-galactose. The enzyme catalyses UDP-beta-L-arabinopyranose = UDP-alpha-D-xylose. Its pathway is carbohydrate metabolism; galactose metabolism. It participates in nucleotide-sugar biosynthesis; UDP-L-arabinose biosynthesis; UDP-L-arabinose from UDP-alpha-D-xylose: step 1/1. The protein operates within cell wall biogenesis; cell wall polysaccharide biosynthesis. Inhibited by Hg(2+). Catalyzes the interconversion between UDP-glucose and UDP-galactose and the interconversion between UDP-arabinose and UDP-xylose. This Pisum sativum (Garden pea) protein is Bifunctional UDP-glucose 4-epimerase and UDP-xylose 4-epimerase 1.